The chain runs to 97 residues: Co-chaperonin GroES (97 aa).

Belongs to the GroES chaperonin family. As to quaternary structure, heptamer of 7 subunits arranged in a ring. Interacts with the chaperonin GroEL.

The protein localises to the cytoplasm. Its function is as follows. Together with the chaperonin GroEL, plays an essential role in assisting protein folding. The GroEL-GroES system forms a nano-cage that allows encapsulation of the non-native substrate proteins and provides a physical environment optimized to promote and accelerate protein folding. GroES binds to the apical surface of the GroEL ring, thereby capping the opening of the GroEL channel. The protein is Co-chaperonin GroES of Burkholderia cepacia (Pseudomonas cepacia).